The following is a 396-amino-acid chain: Vitamin K-dependent protein Z (396 aa).

Residues A1 to M46 form the Gla domain. 13 positions are modified to 4-carboxyglutamate: E7, E8, E11, E15, E17, E20, E21, E26, E27, E30, E33, E36, and E40. A disulfide bridge links C18 with C23. EGF-like domains lie at G47–A83 and A85–L126. Intrachain disulfides connect C51-C62, C56-C71, C73-C82, C89-C101, C97-C110, C112-C125, and C169-C185. S53 carries O-linked (Glc...) serine glycosylation. Residue N59 is glycosylated (N-linked (GlcNAc...) asparagine). Residue D64 is modified to (3R)-3-hydroxyaspartate. Positions T135–Q357 constitute a Peptidase S1 domain. N191 and N289 each carry an N-linked (GlcNAc...) asparagine glycan. A disulfide bridge links C284 with C298. The interval T356–V396 is disordered. Over residues P364–E375 the composition is skewed to basic and acidic residues. T388 is a glycosylation site (O-linked (GalNAc...) threonine).

The protein belongs to the peptidase S1 family. In terms of processing, the iron and 2-oxoglutarate dependent 3-hydroxylation of aspartate and asparagine is (R) stereospecific within EGF domains. As to expression, plasma.

Its subcellular location is the secreted. In terms of biological role, inhibits activity of the coagulation protease factor Xa in the presence of SERPINA10, calcium and phospholipids. Appears to assist hemostasis by binding thrombin and promoting its association with phospholipid vesicles. In Bos taurus (Bovine), this protein is Vitamin K-dependent protein Z (PROZ).